The chain runs to 338 residues: Ornithine carbamoyltransferase (338 aa).

Carbamoyl phosphate contacts are provided by residues 56–59 (STRT), Arg107, and 134–137 (HPTQ). Residues Asn168, Asp232, and 236-237 (SM) contribute to the L-ornithine site. Carbamoyl phosphate contacts are provided by residues 274 to 275 (CL) and Arg320.

Belongs to the aspartate/ornithine carbamoyltransferase superfamily. OTCase family.

The protein localises to the cytoplasm. It carries out the reaction carbamoyl phosphate + L-ornithine = L-citrulline + phosphate + H(+). Its pathway is amino-acid biosynthesis; L-arginine biosynthesis; L-arginine from L-ornithine and carbamoyl phosphate: step 1/3. Reversibly catalyzes the transfer of the carbamoyl group from carbamoyl phosphate (CP) to the N(epsilon) atom of ornithine (ORN) to produce L-citrulline. This is Ornithine carbamoyltransferase (argI) from Buchnera aphidicola subsp. Acyrthosiphon pisum (strain APS) (Acyrthosiphon pisum symbiotic bacterium).